The sequence spans 238 residues: tRNA (guanine-N(7)-)-methyltransferase (238 aa).

The S-adenosyl-L-methionine site is built by Glu-68, Glu-93, Asp-120, and Asp-143. Asp-143 is a catalytic residue. Substrate is bound by residues Lys-147, Asp-179, and 216-219 (TKFE).

This sequence belongs to the class I-like SAM-binding methyltransferase superfamily. TrmB family.

The catalysed reaction is guanosine(46) in tRNA + S-adenosyl-L-methionine = N(7)-methylguanosine(46) in tRNA + S-adenosyl-L-homocysteine. Its pathway is tRNA modification; N(7)-methylguanine-tRNA biosynthesis. In terms of biological role, catalyzes the formation of N(7)-methylguanine at position 46 (m7G46) in tRNA. In Shewanella baltica (strain OS223), this protein is tRNA (guanine-N(7)-)-methyltransferase.